Reading from the N-terminus, the 296-residue chain is Phosphatidylglycerol--prolipoprotein diacylglyceryl transferase (296 aa).

3 helical membrane passes run 17-37 (LAVR…IVVG), 59-79 (MMFY…VLFY), and 97-117 (GGMS…LFAW). An a 1,2-diacyl-sn-glycero-3-phospho-(1'-sn-glycerol)-binding site is contributed by Arg142. 2 consecutive transmembrane segments (helical) span residues 230-250 (MGAI…TVEF) and 265-285 (LSMG…MMIW).

This sequence belongs to the Lgt family.

It localises to the cell inner membrane. It carries out the reaction L-cysteinyl-[prolipoprotein] + a 1,2-diacyl-sn-glycero-3-phospho-(1'-sn-glycerol) = an S-1,2-diacyl-sn-glyceryl-L-cysteinyl-[prolipoprotein] + sn-glycerol 1-phosphate + H(+). It participates in protein modification; lipoprotein biosynthesis (diacylglyceryl transfer). In terms of biological role, catalyzes the transfer of the diacylglyceryl group from phosphatidylglycerol to the sulfhydryl group of the N-terminal cysteine of a prolipoprotein, the first step in the formation of mature lipoproteins. This is Phosphatidylglycerol--prolipoprotein diacylglyceryl transferase from Burkholderia thailandensis (strain ATCC 700388 / DSM 13276 / CCUG 48851 / CIP 106301 / E264).